The sequence spans 222 residues: 26S proteasome non-ATPase regulatory subunit 9 (222 aa).

A PDZ domain is found at 108–194; sequence QARDMAEARE…KPLNVMVIRR (87 aa). The residue at position 128 (S128) is a Phosphoserine.

It belongs to the proteasome subunit p27 family. Interacts with PSMC3. Part of a transient complex (modulator) containing PSMD9, PSMC6 and PSMC3 formed during the assembly of the 26S proteasome.

Functionally, acts as a chaperone during the assembly of the 26S proteasome, specifically of the base subcomplex of the PA700/19S regulatory complex (RC). During the base subcomplex assembly is part of an intermediate PSMD9:PSMC6:PSMC3 module, also known as modulator trimer complex; PSMD9 is released during the further base assembly process. This chain is 26S proteasome non-ATPase regulatory subunit 9 (Psmd9), found in Rattus norvegicus (Rat).